The chain runs to 486 residues: Keratin-3, type I cytoskeletal 51 kDa (486 aa).

The head stretch occupies residues 1-125 (MSNYSIKQSA…AGGMDIFSTN (125 aa)). The tract at residues 126–161 (EKQTMQNLNDRLASYLDKVHALETANTELERKIKEW) is coil 1A. Positions 126–442 (EKQTMQNLND…RLLDGDLSKP (317 aa)) constitute an IF rod domain. The segment at 162 to 184 (YEKQRPGSSSGDGAKDYSKYYTM) is linker 1. Positions 185-276 (INDLKNQIIA…KNHEDELKGM (92 aa)) are coil 1B. The segment at 277–299 (QVTQVGQVNVEMNAAPSSDLTKI) is linker 12. Residues 300-438 (LNDMRSQYED…ETYRRLLDGD (139 aa)) form a coil 2 region. Residues 435–466 (LDGDLSKPKSGGGTSTNTGSTSSKGSTRTVKR) are disordered. The segment at 439 to 486 (LSKPKSGGGTSTNTGSTSSKGSTRTVKRREIIEEVVDGKVVSTKVVDM) is tail. The segment covering 449-461 (STNTGSTSSKGST) has biased composition (low complexity).

This sequence belongs to the intermediate filament family. As to quaternary structure, heterotetramer of two type I and two type II keratins.

This chain is Keratin-3, type I cytoskeletal 51 kDa, found in Xenopus laevis (African clawed frog).